A 491-amino-acid polypeptide reads, in one-letter code: Cysteine--tRNA ligase (491 aa).

Cys-29 contributes to the Zn(2+) binding site. Residues 31–41 carry the 'HIGH' region motif; sequence PTVYDFAHIGN. The Zn(2+) site is built by Cys-227, His-252, and Glu-256. The short motif at 285 to 289 is the 'KMSKS' region element; it reads KMSKS. Position 288 (Lys-288) interacts with ATP.

The protein belongs to the class-I aminoacyl-tRNA synthetase family. In terms of assembly, monomer. Zn(2+) is required as a cofactor.

The protein resides in the cytoplasm. The catalysed reaction is tRNA(Cys) + L-cysteine + ATP = L-cysteinyl-tRNA(Cys) + AMP + diphosphate. The chain is Cysteine--tRNA ligase from Rhodopseudomonas palustris (strain TIE-1).